We begin with the raw amino-acid sequence, 449 residues long: UDP-N-acetylmuramoylalanine--D-glutamate ligase (449 aa).

ATP is bound at residue 113-119 (GTNGKTT).

It belongs to the MurCDEF family.

It localises to the cytoplasm. It carries out the reaction UDP-N-acetyl-alpha-D-muramoyl-L-alanine + D-glutamate + ATP = UDP-N-acetyl-alpha-D-muramoyl-L-alanyl-D-glutamate + ADP + phosphate + H(+). The protein operates within cell wall biogenesis; peptidoglycan biosynthesis. In terms of biological role, cell wall formation. Catalyzes the addition of glutamate to the nucleotide precursor UDP-N-acetylmuramoyl-L-alanine (UMA). This chain is UDP-N-acetylmuramoylalanine--D-glutamate ligase, found in Gloeothece citriformis (strain PCC 7424) (Cyanothece sp. (strain PCC 7424)).